A 219-amino-acid chain; its full sequence is UPF0502 protein Gura_3445 (219 aa).

Positions Ala-162–Gln-181 are disordered.

The protein belongs to the UPF0502 family.

The polypeptide is UPF0502 protein Gura_3445 (Geotalea uraniireducens (strain Rf4) (Geobacter uraniireducens)).